The following is an 824-amino-acid chain: MKEYRPQEIEKKWQEVWEEKKVFYTPQRSEKPKYYALVMFPYPSGTLHVGHVKNYVIGDIVARYKRMRGYNVLHPFGYDAFGLPAENAAIEKGIHPEEWTRKNIATIRQQVKKLGISYDWSREIATCDEEYYKWTQWIFLQLYKNGLAYKKKAAVNWCPKCKTVLANEQVKDGKCERCGTSVTIRHLEQWFFKITDYAERLLNDLDKLTGWPEHVKTMQRNWIGKSTGAEIDFPVEGSDTKIRVFTTRPDTLWGVTFMALAPESPLVEELVPEEKKEELQEFLERVKQQDRFRRTSVEAEKEGFFLGRYAINPVTGERIPIYVANYILMEYGTGAIMGVPAHDQRDFSFAKKYGIPIKVVIKPADKDLDPEKMEEAYEGEGIMVNSGPFDGTPSSEGIEKVINWLEEKGIGKRSVQYKLRDWLISRQRYWGAPIPIIYCEKCGVVPVPEEDLPVRLPKDVEFLPTGQSPLSFHEGFKKTKCPVCGGEAQRETDTMDTFVDSSWYFLRYVNPHLEDKPFEPDDVNYWLPVDQYIGGVEHAVLHLLYSRFVTKVLHDLGYLNFDEPFTNLFTQGMIYKDGAKMSKSKGNVVSPDEMIEKYGADTLRMYILFMAPPEKDAEWSDAGIEGVHRFVKRLWNTFYTVLPFVKEENTENLVLKNSTEKELRRKLHSIIKKITEDIEGGFKFNTAISGLMELVNHLSQYLNSVPQEEWNRKLLREIVEKLTLALSPFAPHLAEEFWHDLGNDSLVVQQSWPSYDPKALEVEEVEIAIQINGKVRDKVVVPVDISEEDLKRIVLERERVKEYVDGKPIRKFIYVKGRIVNIVV.

The 'HIGH' region signature appears at 41 to 51 (PYPSGTLHVGH). The 'KMSKS' region signature appears at 580-584 (KMSKS). Lys583 provides a ligand contact to ATP.

It belongs to the class-I aminoacyl-tRNA synthetase family.

It is found in the cytoplasm. It carries out the reaction tRNA(Leu) + L-leucine + ATP = L-leucyl-tRNA(Leu) + AMP + diphosphate. The chain is Leucine--tRNA ligase from Thermotoga maritima (strain ATCC 43589 / DSM 3109 / JCM 10099 / NBRC 100826 / MSB8).